The following is a 277-amino-acid chain: Methylamine utilization protein MauF (277 aa).

Helical transmembrane passes span Ile-33–Ala-53, Leu-59–Cys-79, Tyr-111–Phe-131, Ser-132–His-152, Trp-179–Thr-199, Met-205–Phe-225, and Ala-257–Ile-277.

The protein resides in the cell membrane. The protein operates within one-carbon metabolism; methylamine degradation. This chain is Methylamine utilization protein MauF (mauF), found in Paracoccus denitrificans.